A 234-amino-acid polypeptide reads, in one-letter code: Large ribosomal subunit protein uL1 (234 aa).

It belongs to the universal ribosomal protein uL1 family. Part of the 50S ribosomal subunit.

In terms of biological role, binds directly to 23S rRNA. The L1 stalk is quite mobile in the ribosome, and is involved in E site tRNA release. Its function is as follows. Protein L1 is also a translational repressor protein, it controls the translation of the L11 operon by binding to its mRNA. This chain is Large ribosomal subunit protein uL1, found in Sulfurovum sp. (strain NBC37-1).